Reading from the N-terminus, the 181-residue chain is MKSIAVTGYKNFELGIFKKDADEAVYIKETIKRHLLPLVEDGLEWVIISGQLGIELWAGDVVAELKEEYPIKLAILEPFEKQSANWNEANQLWANEVLEKADYHAFITKRPYESPAQFAARDGFIIDNTDGALLVYDLEKEGSPKFFYDRALQAKEQANYYLECIDFYALQEVVDDMNQTF.

This sequence belongs to the UPF0398 family.

This is UPF0398 protein LMHCC_0668 from Listeria monocytogenes serotype 4a (strain HCC23).